Reading from the N-terminus, the 248-residue chain is Probable transcriptional regulatory protein P9303_05381 (248 aa).

Belongs to the TACO1 family.

It is found in the cytoplasm. The sequence is that of Probable transcriptional regulatory protein P9303_05381 from Prochlorococcus marinus (strain MIT 9303).